An 872-amino-acid chain; its full sequence is Protein SEY1 (872 aa).

Over 1 to 749 the chain is Cytoplasmic; the sequence is MVANGHFAGV…KRSAIGGITQ (749 aa). One can recognise a GB1/RHD3-type G domain in the interval 49–294; that stretch reads GFNYHLISVF…IEGGIFLPEY (246 aa). Residue 59–66 coordinates GTP; sequence GSQSTGKS. A coiled-coil region spans residues 482 to 504; that stretch reads SNYQQELSLYQKDLENIGGQLRR. A disordered region spans residues 676-704; that stretch reads LDKWIGHTPSSATPADEEDLTPIGGVDED. Residues 690–704 show a composition bias toward acidic residues; sequence ADEEDLTPIGGVDED. The helical transmembrane segment at 750–770 threads the bilayer; it reads VPLYFYGLLLALGWNEIVAVL. At 771–773 the chain is on the lumenal side; sequence RNP. A helical membrane pass occupies residues 774-794; the sequence is AYFLLLFVCAVTAYVTYQLNL. Over 795-872 the chain is Cytoplasmic; sequence WGPIIKMTEA…IDDADDDDDF (78 aa). The segment at 849-872 is disordered; that stretch reads NRKSAGGFQNNRSHIDDADDDDDF.

It belongs to the TRAFAC class dynamin-like GTPase superfamily. GB1/RHD3 GTPase family. RHD3 subfamily.

It localises to the endoplasmic reticulum membrane. In terms of biological role, cooperates with the reticulon proteins and tubule-shaping DP1 family proteins to generate and maintain the structure of the tubular endoplasmic reticulum network. Has GTPase activity, which is required for its function in ER organization. The sequence is that of Protein SEY1 from Paracoccidioides brasiliensis (strain Pb03).